Consider the following 536-residue polypeptide: Formate--tetrahydrofolate ligase (536 aa).

Residue 51–58 (TAAGEGKT) coordinates ATP.

This sequence belongs to the formate--tetrahydrofolate ligase family.

The catalysed reaction is (6S)-5,6,7,8-tetrahydrofolate + formate + ATP = (6R)-10-formyltetrahydrofolate + ADP + phosphate. Its pathway is one-carbon metabolism; tetrahydrofolate interconversion. In Thermoplasma volcanium (strain ATCC 51530 / DSM 4299 / JCM 9571 / NBRC 15438 / GSS1), this protein is Formate--tetrahydrofolate ligase.